A 276-amino-acid polypeptide reads, in one-letter code: Putative respiratory nitrate reductase heme subunit ORF7 (276 aa).

Positions 138 and 228 each coordinate heme b.

As to quaternary structure, probable multiprotein complex; a catalytic heterodimer of an alpha and beta chain is proposed to associate with additional subunits involved in membrane attachment and electron transfer. Heme b serves as cofactor.

It localises to the cell membrane. Functionally, the respiratory membrane-bound nitrate reductase enzyme complex plays a role in generation of metabolic energy by using nitrate as a terminal electron acceptor during anaerobic conditions. May transfer electrons to the iron-sulfur centers of the catalytic beta subunit. This is Putative respiratory nitrate reductase heme subunit ORF7 from Haloferax mediterranei (strain ATCC 33500 / DSM 1411 / JCM 8866 / NBRC 14739 / NCIMB 2177 / R-4) (Halobacterium mediterranei).